A 137-amino-acid chain; its full sequence is Large-conductance mechanosensitive channel (137 aa).

2 consecutive transmembrane segments (helical) span residues Phe-10 to Gly-30 and Gly-76 to Ile-96.

It belongs to the MscL family. Homopentamer.

Its subcellular location is the cell inner membrane. In terms of biological role, channel that opens in response to stretch forces in the membrane lipid bilayer. May participate in the regulation of osmotic pressure changes within the cell. The protein is Large-conductance mechanosensitive channel of Pectobacterium carotovorum subsp. carotovorum (strain PC1).